The primary structure comprises 888 residues: Alanine--tRNA ligase (888 aa).

Zn(2+)-binding residues include histidine 570, histidine 574, cysteine 673, and histidine 677.

It belongs to the class-II aminoacyl-tRNA synthetase family. The cofactor is Zn(2+).

The protein localises to the cytoplasm. The enzyme catalyses tRNA(Ala) + L-alanine + ATP = L-alanyl-tRNA(Ala) + AMP + diphosphate. In terms of biological role, catalyzes the attachment of alanine to tRNA(Ala) in a two-step reaction: alanine is first activated by ATP to form Ala-AMP and then transferred to the acceptor end of tRNA(Ala). Also edits incorrectly charged Ser-tRNA(Ala) and Gly-tRNA(Ala) via its editing domain. The polypeptide is Alanine--tRNA ligase (Chlorobium phaeobacteroides (strain DSM 266 / SMG 266 / 2430)).